A 413-amino-acid polypeptide reads, in one-letter code: Multifunctional CCA protein (413 aa).

Positions 8 and 11 each coordinate ATP. 2 residues coordinate CTP: glycine 8 and arginine 11. Mg(2+)-binding residues include aspartate 21 and aspartate 23. ATP is bound by residues arginine 91, arginine 137, and arginine 140. Positions 91, 137, and 140 each coordinate CTP. The 102-residue stretch at 228–329 folds into the HD domain; sequence TGLHTLMTVT…VKLFDSIDAW (102 aa).

Belongs to the tRNA nucleotidyltransferase/poly(A) polymerase family. Bacterial CCA-adding enzyme type 1 subfamily. As to quaternary structure, monomer. Can also form homodimers and oligomers. Requires Mg(2+) as cofactor. Ni(2+) serves as cofactor.

It catalyses the reaction a tRNA precursor + 2 CTP + ATP = a tRNA with a 3' CCA end + 3 diphosphate. The catalysed reaction is a tRNA with a 3' CCA end + 2 CTP + ATP = a tRNA with a 3' CCACCA end + 3 diphosphate. Its function is as follows. Catalyzes the addition and repair of the essential 3'-terminal CCA sequence in tRNAs without using a nucleic acid template. Adds these three nucleotides in the order of C, C, and A to the tRNA nucleotide-73, using CTP and ATP as substrates and producing inorganic pyrophosphate. tRNA 3'-terminal CCA addition is required both for tRNA processing and repair. Also involved in tRNA surveillance by mediating tandem CCA addition to generate a CCACCA at the 3' terminus of unstable tRNAs. While stable tRNAs receive only 3'-terminal CCA, unstable tRNAs are marked with CCACCA and rapidly degraded. The sequence is that of Multifunctional CCA protein from Klebsiella pneumoniae subsp. pneumoniae (strain ATCC 700721 / MGH 78578).